The chain runs to 262 residues: Fibroin light chain (262 aa).

An N-terminal signal peptide occupies residues 1–16 (MKPIFLVLLVATSAYA). N-acetylserine; in short form is present on S19. An intrachain disulfide couples C101 to C160.

In terms of assembly, silk fibroin elementary unit consists in a disulfide-linked heavy and light chain and a p25 glycoprotein in molar ratios of 6:6:1. This results in a complex of approximately 2.3 MDa. The interchain disulfide bridge is essential for the intracellular transport and secretion of fibroin. In terms of processing, partially N-terminally processed to yield a short form which lacks the first two residues of the long form. In terms of tissue distribution, produced exclusively in the posterior (PSG) section of silk glands, which are essentially modified salivary glands.

The protein resides in the secreted. Functionally, it is likely that the major role of L-chain is to prevent the retention of H-chain in ER by forming the disulfide linkage. This chain is Fibroin light chain (FIBL), found in Bombyx mori (Silk moth).